We begin with the raw amino-acid sequence, 992 residues long: ATP-dependent 6-phosphofructokinase subunit alpha (992 aa).

The segment at 1-558 (MNNSVYGVAF…LYSNFMSTTV (558 aa)) is N-terminal catalytic PFK domain 1. ATP-binding positions include Gly-193, 256-257 (RS), and 286-289 (GDGS). Asp-287 contacts Mg(2+). Beta-D-fructose 6-phosphate-binding positions include 332–334 (SID), Arg-369, 376–378 (MGR), Glu-433, Lys-460, and 466–469 (HVQR). Asp-334 serves as the catalytic Proton acceptor. Residues 559-572 (NDDGSQLLPEADRL) are interdomain linker. The C-terminal regulatory PFK domain 2 stretch occupies residues 573–992 (NIAIVHVGAP…AAKEDSALYV (420 aa)). Beta-D-fructose 2,6-bisphosphate is bound by residues Arg-643, 700 to 704 (TVSNN), Arg-738, 745 to 747 (QGG), Glu-805, Arg-831, 837 to 840 (HVQQ), and Arg-929.

The protein belongs to the phosphofructokinase type A (PFKA) family. ATP-dependent PFK group I subfamily. Eukaryotic two domain clade 'E' sub-subfamily. As to quaternary structure, heterooctamer of 4 alpha and 4 beta chains. Mg(2+) is required as a cofactor.

The protein resides in the cytoplasm. The catalysed reaction is beta-D-fructose 6-phosphate + ATP = beta-D-fructose 1,6-bisphosphate + ADP + H(+). Its pathway is carbohydrate degradation; glycolysis; D-glyceraldehyde 3-phosphate and glycerone phosphate from D-glucose: step 3/4. Its activity is regulated as follows. Allosterically activated by ADP, AMP, or fructose 2,6-bisphosphate, and allosterically inhibited by ATP or citrate. Functionally, catalyzes the phosphorylation of D-fructose 6-phosphate to fructose 1,6-bisphosphate by ATP, the first committing step of glycolysis. This is ATP-dependent 6-phosphofructokinase subunit alpha (PFK1) from Kluyveromyces lactis (strain ATCC 8585 / CBS 2359 / DSM 70799 / NBRC 1267 / NRRL Y-1140 / WM37) (Yeast).